We begin with the raw amino-acid sequence, 179 residues long: Lebocin-1/2 (179 aa).

The N-terminal stretch at methionine 1–alanine 16 is a signal peptide. The propeptide occupies glutamine 17–arginine 120. Positions asparagine 93–histidine 116 are disordered. Residue threonine 135 is glycosylated (O-linked (GalNAc...) threonine). The propeptide occupies arginine 153–glutamate 179.

It belongs to the lebocin family. O-glycosylation is important for the antibacterial activity of lebocin, O-linked glycan structure is a disaccharide (Gal-GalNAc) in case of lebocin 1 and a monosaccharide (GalNAc) in case of lebocin 2. As to expression, hemolymph. Produced in fat body.

Its subcellular location is the secreted. In terms of biological role, antibacterial peptide. The sequence is that of Lebocin-1/2 from Bombyx mori (Silk moth).